A 670-amino-acid polypeptide reads, in one-letter code: Probable urocanate hydratase (670 aa).

NAD(+)-binding positions include 126–127 (GG), Gln204, 250–252 (GMS), Glu270, 316–317 (NV), 338–342 (QTSLH), 349–350 (FY), Tyr398, and Gly590.

Belongs to the urocanase family. NAD(+) serves as cofactor.

It carries out the reaction 4-imidazolone-5-propanoate = trans-urocanate + H2O. The protein operates within amino-acid degradation; L-histidine degradation into L-glutamate; N-formimidoyl-L-glutamate from L-histidine: step 2/3. This chain is Probable urocanate hydratase, found in Caenorhabditis elegans.